The primary structure comprises 278 residues: Large ribosomal subunit protein uL2 (278 aa).

Residues 224–262 (VMNPVDHPLGGGEGRTSGGRHPVTPWGKPTKGFKTRKTR) are disordered.

The protein belongs to the universal ribosomal protein uL2 family. In terms of assembly, part of the 50S ribosomal subunit. Forms a bridge to the 30S subunit in the 70S ribosome.

Functionally, one of the primary rRNA binding proteins. Required for association of the 30S and 50S subunits to form the 70S ribosome, for tRNA binding and peptide bond formation. It has been suggested to have peptidyltransferase activity; this is somewhat controversial. Makes several contacts with the 16S rRNA in the 70S ribosome. The polypeptide is Large ribosomal subunit protein uL2 (Leptospira biflexa serovar Patoc (strain Patoc 1 / Ames)).